The primary structure comprises 193 residues: Probable nicotinate-nucleotide adenylyltransferase (193 aa).

This sequence belongs to the NadD family.

It carries out the reaction nicotinate beta-D-ribonucleotide + ATP + H(+) = deamido-NAD(+) + diphosphate. It participates in cofactor biosynthesis; NAD(+) biosynthesis; deamido-NAD(+) from nicotinate D-ribonucleotide: step 1/1. Its function is as follows. Catalyzes the reversible adenylation of nicotinate mononucleotide (NaMN) to nicotinic acid adenine dinucleotide (NaAD). This chain is Probable nicotinate-nucleotide adenylyltransferase, found in Flavobacterium johnsoniae (strain ATCC 17061 / DSM 2064 / JCM 8514 / BCRC 14874 / CCUG 350202 / NBRC 14942 / NCIMB 11054 / UW101) (Cytophaga johnsonae).